The sequence spans 367 residues: Chorismate synthase (367 aa).

The segment at 41–60 (FTHDLQRRASGKSRHTSARR) is disordered. Positions 48 and 54 each coordinate NADP(+). Residues 125–127 (RSS), 238–239 (NA), glycine 278, 293–297 (KPTSS), and arginine 319 contribute to the FMN site.

This sequence belongs to the chorismate synthase family. Homotetramer. The cofactor is FMNH2.

It catalyses the reaction 5-O-(1-carboxyvinyl)-3-phosphoshikimate = chorismate + phosphate. It participates in metabolic intermediate biosynthesis; chorismate biosynthesis; chorismate from D-erythrose 4-phosphate and phosphoenolpyruvate: step 7/7. Its function is as follows. Catalyzes the anti-1,4-elimination of the C-3 phosphate and the C-6 proR hydrogen from 5-enolpyruvylshikimate-3-phosphate (EPSP) to yield chorismate, which is the branch point compound that serves as the starting substrate for the three terminal pathways of aromatic amino acid biosynthesis. This reaction introduces a second double bond into the aromatic ring system. This Xanthomonas axonopodis pv. citri (strain 306) protein is Chorismate synthase.